We begin with the raw amino-acid sequence, 443 residues long: Probable glycine dehydrogenase (decarboxylating) subunit 1 (443 aa).

It belongs to the GcvP family. N-terminal subunit subfamily. As to quaternary structure, the glycine cleavage system is composed of four proteins: P, T, L and H. In this organism, the P 'protein' is a heterodimer of two subunits.

The enzyme catalyses N(6)-[(R)-lipoyl]-L-lysyl-[glycine-cleavage complex H protein] + glycine + H(+) = N(6)-[(R)-S(8)-aminomethyldihydrolipoyl]-L-lysyl-[glycine-cleavage complex H protein] + CO2. The glycine cleavage system catalyzes the degradation of glycine. The P protein binds the alpha-amino group of glycine through its pyridoxal phosphate cofactor; CO(2) is released and the remaining methylamine moiety is then transferred to the lipoamide cofactor of the H protein. The sequence is that of Probable glycine dehydrogenase (decarboxylating) subunit 1 from Maridesulfovibrio salexigens (strain ATCC 14822 / DSM 2638 / NCIMB 8403 / VKM B-1763) (Desulfovibrio salexigens).